A 170-amino-acid chain; its full sequence is Capsid protein (170 aa).

Positions 1-19 (MAQLRWGRKGVRSQRRKYS) are enriched in basic residues. The tract at residues 1-25 (MAQLRWGRKGVRSQRRKYSRPVAYK) is disordered.

It belongs to the nanoviridae capsid protein family.

The protein localises to the virion. The sequence is that of Capsid protein (DNA-S) from Subterranean clover stunt virus (strain J) (SCSV).